We begin with the raw amino-acid sequence, 1145 residues long: MKPGRKSLPKKNRASNITEKMPTTSTEAQSSSSKNQDRCRSFSQELGVDDEPEEQQAPVATPKQTKKAQKTAKTTEEVKSPRKSARKSELKKPEPEEKAKEPRKSASKRKSSSLMNKDEPSTSTEAPSADVPGTSEASDEASEIQEAPENPNSALAIKKRLMGGGESSKSAPTKNPPKARKSNVKKPEKEAEALAPPEPPAEPQEAAETPAPEPLVPEKKPKIEDAPTTSSPKKSTPTSAPPTRASARVSKPNRLYADGSFNTEILGRTRITEQNPVKEAQAKESTPELADLPLPAGRRKSTAAPRAPPAPKPIPVINGVLRGYIPSVKVPLAEYEVDGEIINLNEGVNETMDTILAKVCEDGVEKHEDIDPKVVKAKKLAKIDYTKRLKLQVKKLDIQMRIKIPSTPEELGKRKRQAPKTDDFYWSAQSRTKLKGSSKEREETPAFDEESPIGGDEKRQQKARESISHLFDAEMDASIKEAKKYSVSFDKYIKPKITGALKHAKIKLMSRKRQSAEPDDFYYHELLVDQVSPSNSNVENVDVDVDIEETDDKVDPTEFEISEEGVIGIRDEAVDMAEQIALVIPRPTKHDGSPMSMDEIQMRAMEHVESRTKCLDGSLEIVLNQLGHEMAPPTRGVEEQGCQWHTVTSANAQALKNLYTIANNCTEDAITWTHQFMIENLEVHMLASYLSILKYAKRLNSSRFGYVISSTDQLDPEWTQVTSLLKSFVYKRHTEPGTEVLNNTIPYHRMTDTVFLLVPPTLTFGDHQRAPPRHHARIFRWLQSIGHQDSEFISFDEDIDATCSVAEYLSDVIVERICDKVRQKNKYRPNCNVVLVGYGASTYLIHRAANLVEGISAIISIGFPVMTSLGRRGTADDEILLTYCPTLFIVGAEGRRFNNEAITELRTSMISPSGLVVVGHSNDMILVPTSMLLRLGISQTVVFRMVLEKILDFLNLEPVRQQEFADLVPIELNNVFDLDSALLKSDKALSGLAFASSTHSASSSAAPSPVGASGRRATVTGAGSEDIAKRRKESIILSQQIAAPSISGPPPPAPSPRTEDRFLAFQNLVASTITTGDDMPRRASMGASPRVIERGDFRDHRPPPPPPLPILQNPVATPMSQQPPLPSPAPPPPRGPVDPASISLI.

The span at 1–13 shows a compositional bias: basic residues; sequence MKPGRKSLPKKNR. 5 disordered regions span residues 1–310, 429–464, 999–1025, 1040–1059, and 1073–1145; these read MKPG…APPA, QSRT…QKAR, HSAS…AGSE, QIAA…PRTE, and ITTG…ISLI. The span at 14 to 34 shows a compositional bias: polar residues; the sequence is ASNITEKMPTTSTEAQSSSSK. Composition is skewed to basic and acidic residues over residues 73 to 104 and 216 to 225; these read KTTE…EPRK and VPEKKPKIED. Positions 226-248 are enriched in low complexity; the sequence is APTTSSPKKSTPTSAPPTRASAR. A compositionally biased stretch (basic and acidic residues) spans 455-464; the sequence is GDEKRQQKAR. Positions 999–1013 are enriched in low complexity; sequence HSASSSAAPSPVGAS. The span at 1091–1102 shows a compositional bias: basic and acidic residues; that stretch reads VIERGDFRDHRP. Residues 1121-1136 show a composition bias toward pro residues; sequence QQPPLPSPAPPPPRGP.

Functionally, influences the activity of genes involved in vulval development. In Caenorhabditis elegans, this protein is Protein sumv-2.